A 283-amino-acid chain; its full sequence is Beta-glucoside operon antiterminator (283 aa).

PRD domains follow at residues 65-170 and 171-280; these read RIPL…SHMP and EVMR…LQEQ.

The protein belongs to the transcriptional antiterminator BglG family. In terms of processing, phosphorylated and inactivated by ArbF (EII-Bgl). The degree of phosphorylation is dependent on the presence or absence of beta-glucosides which act as inducers of the operon expression. Addition of inducer result in the rapid dephosphorylation of ArbG.

In terms of biological role, mediates the positive regulation of the beta-glucoside (arb) operon by functioning as a transcriptional antiterminator. This is an RNA-binding protein that recognizes a specific sequence located just upstream of two termination sites within the operon. This chain is Beta-glucoside operon antiterminator (arbG), found in Dickeya chrysanthemi (Pectobacterium chrysanthemi).